Here is a 135-residue protein sequence, read N- to C-terminus: Large ribosomal subunit protein uL16c (135 aa).

This sequence belongs to the universal ribosomal protein uL16 family. Part of the 50S ribosomal subunit.

The protein resides in the plastid. It localises to the chloroplast. The polypeptide is Large ribosomal subunit protein uL16c (Vitis vinifera (Grape)).